The primary structure comprises 1086 residues: Pol polyprotein (1086 aa).

Residues 39–110 enclose the Peptidase A2 domain; it reads KKVLVDTGAD…SPVEVLGRDN (72 aa). The active site involves D44. Residues 167 to 356 form the Reverse transcriptase domain; it reads EGKVGRAPPH…YPAKWLGFEL (190 aa). An RNase H type-1 domain is found at 551–673; it reads VVEGPTYYTD…IDKYISEIFL (123 aa). The segment at 808 to 849 adopts an Integrase-type zinc-finger fold; sequence ENIPLAEEDHSKWHQDAGSLHLDFGIPRTAAEDIVQQCEVCQ. The Zn(2+) site is built by H817, H821, C845, and C848. An Integrase catalytic domain is found at 850 to 1010; it reads ENKMPSTIRG…SPMDIFIFNK (161 aa). Residues 1027 to 1079 constitute a DNA-binding region (integrase-type); sequence RFCYYRVRKRGHPGEWLGPTQVLWEGEGAIVIKDKNLEKYLVIAKKDVKFIPQ.

It belongs to the retroviral Pol polyprotein family. Post-translationally, cleavage sites that yield the mature proteins remain to be determined.

It carries out the reaction Endohydrolysis of RNA in RNA/DNA hybrids. Three different cleavage modes: 1. sequence-specific internal cleavage of RNA. Human immunodeficiency virus type 1 and Moloney murine leukemia virus enzymes prefer to cleave the RNA strand one nucleotide away from the RNA-DNA junction. 2. RNA 5'-end directed cleavage 13-19 nucleotides from the RNA end. 3. DNA 3'-end directed cleavage 15-20 nucleotides away from the primer terminus.. The catalysed reaction is 3'-end directed exonucleolytic cleavage of viral RNA-DNA hybrid.. It catalyses the reaction dUTP + H2O = dUMP + diphosphate + H(+). The enzyme catalyses DNA(n) + a 2'-deoxyribonucleoside 5'-triphosphate = DNA(n+1) + diphosphate. During replicative cycle of retroviruses, the reverse-transcribed viral DNA is integrated into the host chromosome by the viral integrase enzyme. RNase H activity is associated with the reverse transcriptase. The polypeptide is Pol polyprotein (pol) (Ovis aries (Sheep)).